A 614-amino-acid polypeptide reads, in one-letter code: Vitamin B12 transporter BtuB (614 aa).

The signal sequence occupies residues 1-20 (MIKKATLLTAFSVTAFSAWA). A TonB box motif is present at residues 26–33 (DTLVVTAN). The 115-residue stretch at 38 to 152 (PRSAVLAPVT…IGGVVNIITT (115 aa)) folds into the TBDR plug domain. Residues serine 85, asparagine 92, and 110-111 (VS) contribute to the cyanocob(III)alamin site. One can recognise a TBDR beta-barrel domain in the interval 155 to 614 (NPGTELTAGW…EYTLSGSYTF (460 aa)). 3 consecutive transmembrane segments (beta stranded) span residues 158–165 (TELTAGWG), 169–178 (YQNYDISTQQ), and 184–195 (TRATLIGDYEYT). Ca(2+)-binding residues include aspartate 199, glutamine 211, aspartate 213, and aspartate 215. Transmembrane regions (beta stranded) follow at residues 217-227 (FLSKTLYGALE) and 232-248 (DRWS…NRTD). Ca(2+) is bound by residues tyrosine 249 and aspartate 250. Residue alanine 251 coordinates cyanocob(III)alamin. Aspartate 261 is a Ca(2+) binding site. 14 beta stranded membrane-spanning segments follow: residues 263 to 277 (RKLY…LRFN), 279 to 296 (ERIQ…KDYN), 309 to 325 (TLDE…NSVV), 328 to 337 (HGNVGAGVDW), 353 to 369 (YDQR…QQLG), 371 to 381 (FTLEAAARSDD), 385 to 400 (FGRH…WEFI), 403 to 417 (YRFI…KAPN), 434 to 443 (KSKQWEGAFE), 449 to 458 (VSWRISGYRN), 473 to 490 (YYNE…TANF), 494 to 509 (PLTH…ARNA), 517 to 529 (RRSK…QLDW), and 535 to 550 (DWGV…YDSD). Threonine 309 provides a ligand contact to cyanocob(III)alamin. Arginine 517 is a cyanocob(III)alamin binding site. A cyanocob(III)alamin-binding site is contributed by tyrosine 551. Transmembrane regions (beta stranded) follow at residues 558 to 572 (TVKM…LTVA), 585 to 596 (IANLFDKDYETV), and 602 to 614 (AGRE…SYTF). Residues 597 to 614 (YGYQTAGREYTLSGSYTF) carry the TonB C-terminal box motif.

The protein belongs to the TonB-dependent receptor family. BtuB (TC 1.B.14.3.1) subfamily.

The protein resides in the cell outer membrane. In terms of biological role, involved in the active translocation of vitamin B12 (cyanocobalamin) across the outer membrane to the periplasmic space. It derives its energy for transport by interacting with the trans-periplasmic membrane protein TonB. The protein is Vitamin B12 transporter BtuB of Salmonella choleraesuis (strain SC-B67).